The chain runs to 365 residues: Caffeic acid 3-O-methyltransferase (365 aa).

Residue Asn131 participates in (E)-ferulate binding. Residues Gly208, Asp231, Asp251, Met252, Met264, and Lys265 each contribute to the S-adenosyl-L-homocysteine site. His269 acts as the Proton acceptor in catalysis. Position 270 (Asp270) interacts with (E)-5-hydroxyferulate. Catalysis depends on residues Glu297 and Glu329.

It belongs to the class I-like SAM-binding methyltransferase superfamily. Cation-independent O-methyltransferase family. COMT subfamily. In terms of assembly, homodimer. More abundant in roots and stems.

The enzyme catalyses (E)-caffeate + S-adenosyl-L-methionine = (E)-ferulate + S-adenosyl-L-homocysteine + H(+). It carries out the reaction (E)-5-hydroxyferulate + S-adenosyl-L-methionine = (E)-sinapate + S-adenosyl-L-homocysteine + H(+). The protein operates within aromatic compound metabolism; phenylpropanoid biosynthesis. Functionally, catalyzes the conversion of caffeic acid to ferulic acid and of 5-hydroxyferulic acid to sinapic acid. The resulting products may subsequently be converted to the corresponding alcohols that are incorporated into lignins. This Medicago sativa (Alfalfa) protein is Caffeic acid 3-O-methyltransferase.